We begin with the raw amino-acid sequence, 106 residues long: Chaperone modulatory protein CbpM (106 aa).

Belongs to the CbpM family.

Interacts with CbpA and inhibits both the DnaJ-like co-chaperone activity and the DNA binding activity of CbpA. Together with CbpA, modulates the activity of the DnaK chaperone system. Does not inhibit the co-chaperone activity of DnaJ. This chain is Chaperone modulatory protein CbpM, found in Coxiella burnetii (strain CbuK_Q154) (Coxiella burnetii (strain Q154)).